The sequence spans 517 residues: Splicing factor U2AF 59 kDa subunit (517 aa).

Residues 1–13 (MDLSSRLSSGSSR) show a composition bias toward low complexity. The segment at 1 to 112 (MDLSSRLSSG…PSRERSVRSI (112 aa)) is disordered. Over residues 20–89 (DYRDEEPRRE…RRYDDYEPRS (70 aa)) the composition is skewed to basic and acidic residues. RRM domains lie at 310–388 (DKIY…FACV) and 418–509 (RVLQ…FYGE).

It belongs to the splicing factor SR family. As to quaternary structure, forms a heterodimer with the U2AF small subunit. Can also form a homodimer. U2AF large subunit (U2AF59), U2AF small subunit (U2AF23) and SF1 (bpb1) interact to form a complex required for complex A formation. Interacts with wat1/pop3.

Its subcellular location is the nucleus. Necessary for the splicing of pre-mRNA. The SF1-U2AF59-U2AF23 complex has a role in the recognition of the branch site (5'-UACUAAC-3'), the pyrimidine tract and the 3'-splice site at the 3'-end of introns. The chain is Splicing factor U2AF 59 kDa subunit (prp2) from Schizosaccharomyces pombe (strain 972 / ATCC 24843) (Fission yeast).